The following is a 376-amino-acid chain: 26S proteasome non-ATPase regulatory subunit 13 (376 aa).

A PCI domain is found at 171 to 338 (SYYKDALRFL…KRVHMTWVQP (168 aa)). At Lys-298 the chain carries N6-acetyllysine.

It belongs to the proteasome subunit S11 family. Component of the 19S proteasome regulatory particle complex. The 26S proteasome consists of a 20S core particle (CP) and two 19S regulatory subunits (RP). The regulatory particle is made of a lid composed of 9 subunits including PSMD13, a base containing 6 ATPases and few additional components.

In terms of biological role, component of the 26S proteasome, a multiprotein complex involved in the ATP-dependent degradation of ubiquitinated proteins. This complex plays a key role in the maintenance of protein homeostasis by removing misfolded or damaged proteins, which could impair cellular functions, and by removing proteins whose functions are no longer required. Therefore, the proteasome participates in numerous cellular processes, including cell cycle progression, apoptosis, or DNA damage repair. The protein is 26S proteasome non-ATPase regulatory subunit 13 of Rattus norvegicus (Rat).